The following is a 231-amino-acid chain: NADH-ubiquinone oxidoreductase chain 4 (231 aa).

The next 7 membrane-spanning stretches (helical) occupy residues 1 to 21 (PIAG…YGII), 34 to 54 (LFLP…LTCL), 63 to 85 (IAYS…TPWG), 89 to 111 (AMAL…NTTY), 128 to 148 (ILPM…AIPP), 156 to 176 (LLIM…LGLS), and 211 to 231 (LLIA…ELVI).

It belongs to the complex I subunit 4 family.

The protein localises to the mitochondrion membrane. The catalysed reaction is a ubiquinone + NADH + 5 H(+)(in) = a ubiquinol + NAD(+) + 4 H(+)(out). Core subunit of the mitochondrial membrane respiratory chain NADH dehydrogenase (Complex I) that is believed to belong to the minimal assembly required for catalysis. Complex I functions in the transfer of electrons from NADH to the respiratory chain. The immediate electron acceptor for the enzyme is believed to be ubiquinone. This chain is NADH-ubiquinone oxidoreductase chain 4 (MT-ND4), found in Crotalus adamanteus (Eastern diamondback rattlesnake).